A 655-amino-acid polypeptide reads, in one-letter code: Peroxidase skpo-1 (655 aa).

The signal sequence occupies residues Met-1–Ser-19. The ShKT domain maps to Cys-22 to Cys-56. Intrachain disulfides connect Cys-22-Cys-56, Cys-29-Cys-49, Cys-38-Cys-53, and Cys-133-Cys-150. The active-site Proton acceptor is the His-222. His-428 lines the heme b pocket. Cystine bridges form between Cys-520–Cys-576 and Cys-617–Cys-642.

The protein belongs to the peroxidase family. XPO subfamily. The cofactor is heme b. In terms of tissue distribution, exclusively expressed in hypodermis.

It catalyses the reaction 2 a phenolic donor + H2O2 = 2 a phenolic radical donor + 2 H2O. Its function is as follows. Involved in hypodermal immune response against some types of bacterial infection. Probably utilizes H(2)O(2) produced by the NADPH oxidase bli-3. May play a role in cuticule biosynthesis. This Caenorhabditis elegans protein is Peroxidase skpo-1.